We begin with the raw amino-acid sequence, 379 residues long: Sulfate adenylyltransferase (379 aa).

It belongs to the sulfate adenylyltransferase family.

The enzyme catalyses sulfate + ATP + H(+) = adenosine 5'-phosphosulfate + diphosphate. It participates in sulfur metabolism; hydrogen sulfide biosynthesis; sulfite from sulfate: step 1/3. The polypeptide is Sulfate adenylyltransferase (Thermococcus onnurineus (strain NA1)).